The primary structure comprises 364 residues: Anhydro-N-acetylmuramic acid kinase (364 aa).

12–19 contributes to the ATP binding site; the sequence is GTSHDAID.

This sequence belongs to the anhydro-N-acetylmuramic acid kinase family.

The catalysed reaction is 1,6-anhydro-N-acetyl-beta-muramate + ATP + H2O = N-acetyl-D-muramate 6-phosphate + ADP + H(+). The protein operates within amino-sugar metabolism; 1,6-anhydro-N-acetylmuramate degradation. It participates in cell wall biogenesis; peptidoglycan recycling. Catalyzes the specific phosphorylation of 1,6-anhydro-N-acetylmuramic acid (anhMurNAc) with the simultaneous cleavage of the 1,6-anhydro ring, generating MurNAc-6-P. Is required for the utilization of anhMurNAc either imported from the medium or derived from its own cell wall murein, and thus plays a role in cell wall recycling. This is Anhydro-N-acetylmuramic acid kinase from Gamma-proteobacterium EBAC31A08.